Consider the following 279-residue polypeptide: Thymidylate synthase (279 aa).

R37 is a dUMP binding site. H67 contacts (6R)-5,10-methylene-5,6,7,8-tetrahydrofolate. 142 to 143 (RR) contributes to the dUMP binding site. C162 acts as the Nucleophile in catalysis. Residues 182 to 185 (RSAD), N193, and 223 to 225 (HLY) each bind dUMP. Position 185 (D185) interacts with (6R)-5,10-methylene-5,6,7,8-tetrahydrofolate. S278 is a binding site for (6R)-5,10-methylene-5,6,7,8-tetrahydrofolate.

It belongs to the thymidylate synthase family. Bacterial-type ThyA subfamily. In terms of assembly, homodimer.

The protein resides in the cytoplasm. The enzyme catalyses dUMP + (6R)-5,10-methylene-5,6,7,8-tetrahydrofolate = 7,8-dihydrofolate + dTMP. The protein operates within pyrimidine metabolism; dTTP biosynthesis. In terms of biological role, catalyzes the reductive methylation of 2'-deoxyuridine-5'-monophosphate (dUMP) to 2'-deoxythymidine-5'-monophosphate (dTMP) while utilizing 5,10-methylenetetrahydrofolate (mTHF) as the methyl donor and reductant in the reaction, yielding dihydrofolate (DHF) as a by-product. This enzymatic reaction provides an intracellular de novo source of dTMP, an essential precursor for DNA biosynthesis. The sequence is that of Thymidylate synthase from Caulobacter vibrioides (strain ATCC 19089 / CIP 103742 / CB 15) (Caulobacter crescentus).